Reading from the N-terminus, the 200-residue chain is Large ribosomal subunit protein uL4 (200 aa).

Residues 42–65 (TRAQKTRSDVSGGGAKPWRQKGTG) form a disordered region.

The protein belongs to the universal ribosomal protein uL4 family. As to quaternary structure, part of the 50S ribosomal subunit.

Its function is as follows. One of the primary rRNA binding proteins, this protein initially binds near the 5'-end of the 23S rRNA. It is important during the early stages of 50S assembly. It makes multiple contacts with different domains of the 23S rRNA in the assembled 50S subunit and ribosome. Functionally, forms part of the polypeptide exit tunnel. This chain is Large ribosomal subunit protein uL4, found in Photobacterium profundum (strain SS9).